Here is a 23-residue protein sequence, read N- to C-terminus: Alpha-conotoxin-like RgIB (23 aa).

Intrachain disulfides connect Cys5-Cys11 and Cys6-Cys19. Positions 7-9 are lacks the Ser-Xaa-Pro motif that is crucial for potent interaction with nAChR; sequence KNP.

As to expression, expressed by venom duct.

The protein resides in the secreted. Its function is as follows. Alpha-conotoxins act on postsynaptic membranes, they bind to the nicotinic acetylcholine receptors (nAChR) and thus inhibit them. Is a specific blocker of the alpha-3-beta-4/CHRNA3-CHRNB4 image nAChR and may also block alpha-3-beta-4-alpha-5 (CHRNA3-CHRNB4-CHRNA5) channels. Has possibly a distinct nAChR binding mode from other alpha-conotoxins, due to a different three residue motif (lacks the Ser-Xaa-Pro motif). In vivo, causes hyperactivity and behavioral disorders in mice following intracranial injection. This Conus regius (Crown cone) protein is Alpha-conotoxin-like RgIB.